Here is a 329-residue protein sequence, read N- to C-terminus: uncharacterized protein (329 aa).

This is an uncharacterized protein from Bacillus subtilis (strain 168).